Consider the following 134-residue polypeptide: Holo-[acyl-carrier-protein] synthase (134 aa).

Mg(2+) is bound by residues Asp-8 and Glu-58.

The protein belongs to the P-Pant transferase superfamily. AcpS family. Mg(2+) serves as cofactor.

Its subcellular location is the cytoplasm. It catalyses the reaction apo-[ACP] + CoA = holo-[ACP] + adenosine 3',5'-bisphosphate + H(+). In terms of biological role, transfers the 4'-phosphopantetheine moiety from coenzyme A to a Ser of acyl-carrier-protein. In Acidiphilium cryptum (strain JF-5), this protein is Holo-[acyl-carrier-protein] synthase.